Reading from the N-terminus, the 236-residue chain is Uridylate kinase (236 aa).

10 to 13 is an ATP binding site; sequence KLSG. Residues 18 to 23 are involved in allosteric activation by GTP; sequence GEDGYG. Gly52 contacts UMP. ATP is bound by residues Gly53 and Arg57. UMP is bound by residues Asp72 and 133–140; that span reads TGNPYFTT. Residues Thr160, Tyr166, and Asp169 each coordinate ATP.

Belongs to the UMP kinase family. In terms of assembly, homohexamer.

The protein resides in the cytoplasm. It carries out the reaction UMP + ATP = UDP + ADP. It participates in pyrimidine metabolism; CTP biosynthesis via de novo pathway; UDP from UMP (UMPK route): step 1/1. Its activity is regulated as follows. Allosterically activated by GTP. Inhibited by UTP. Its function is as follows. Catalyzes the reversible phosphorylation of UMP to UDP. The chain is Uridylate kinase from Chlorobium phaeobacteroides (strain DSM 266 / SMG 266 / 2430).